Reading from the N-terminus, the 250-residue chain is NADH-quinone oxidoreductase subunit C (250 aa).

The protein belongs to the complex I 30 kDa subunit family. As to quaternary structure, NDH-1 is composed of 14 different subunits. Subunits NuoB, C, D, E, F, and G constitute the peripheral sector of the complex.

It is found in the cell inner membrane. The catalysed reaction is a quinone + NADH + 5 H(+)(in) = a quinol + NAD(+) + 4 H(+)(out). Functionally, NDH-1 shuttles electrons from NADH, via FMN and iron-sulfur (Fe-S) centers, to quinones in the respiratory chain. The immediate electron acceptor for the enzyme in this species is believed to be ubiquinone. Couples the redox reaction to proton translocation (for every two electrons transferred, four hydrogen ions are translocated across the cytoplasmic membrane), and thus conserves the redox energy in a proton gradient. The sequence is that of NADH-quinone oxidoreductase subunit C from Xanthomonas euvesicatoria pv. vesicatoria (strain 85-10) (Xanthomonas campestris pv. vesicatoria).